A 100-amino-acid polypeptide reads, in one-letter code: NADH-quinone oxidoreductase subunit K (100 aa).

3 helical membrane-spanning segments follow: residues 2-22, 28-48, and 63-83; these read ISLN…LFGI, ILML…GFVA, and LFII…VVIW.

The protein belongs to the complex I subunit 4L family. In terms of assembly, NDH-1 is composed of 14 different subunits. Subunits NuoA, H, J, K, L, M, N constitute the membrane sector of the complex.

It localises to the cell inner membrane. The catalysed reaction is a quinone + NADH + 5 H(+)(in) = a quinol + NAD(+) + 4 H(+)(out). Its function is as follows. NDH-1 shuttles electrons from NADH, via FMN and iron-sulfur (Fe-S) centers, to quinones in the respiratory chain. The immediate electron acceptor for the enzyme in this species is believed to be ubiquinone. Couples the redox reaction to proton translocation (for every two electrons transferred, four hydrogen ions are translocated across the cytoplasmic membrane), and thus conserves the redox energy in a proton gradient. The protein is NADH-quinone oxidoreductase subunit K of Helicobacter hepaticus (strain ATCC 51449 / 3B1).